The following is a 218-amino-acid chain: Protein GrpE (218 aa).

Positions 1–75 (MTTPNGMPDN…DVDPDLDGDG (75 aa)) are disordered. The segment covering 23 to 40 (SADRAEQAAEEAAARQAE) has biased composition (basic and acidic residues). Over residues 48–75 (SEEEISPELEAEINDLLSDVDPDLDGDG) the composition is skewed to acidic residues.

It belongs to the GrpE family. Homodimer.

The protein resides in the cytoplasm. Its function is as follows. Participates actively in the response to hyperosmotic and heat shock by preventing the aggregation of stress-denatured proteins, in association with DnaK and GrpE. It is the nucleotide exchange factor for DnaK and may function as a thermosensor. Unfolded proteins bind initially to DnaJ; upon interaction with the DnaJ-bound protein, DnaK hydrolyzes its bound ATP, resulting in the formation of a stable complex. GrpE releases ADP from DnaK; ATP binding to DnaK triggers the release of the substrate protein, thus completing the reaction cycle. Several rounds of ATP-dependent interactions between DnaJ, DnaK and GrpE are required for fully efficient folding. The chain is Protein GrpE from Corynebacterium glutamicum (strain ATCC 13032 / DSM 20300 / JCM 1318 / BCRC 11384 / CCUG 27702 / LMG 3730 / NBRC 12168 / NCIMB 10025 / NRRL B-2784 / 534).